Here is a 560-residue protein sequence, read N- to C-terminus: Chaperonin GroEL 2 (560 aa).

ATP-binding positions include 29–32 (TLGP), 86–90 (DGTTT), Gly413, 478–480 (NAA), and Asp494.

Belongs to the chaperonin (HSP60) family. In terms of assembly, forms a cylinder of 14 subunits composed of two heptameric rings stacked back-to-back. Interacts with the co-chaperonin GroES.

It is found in the cytoplasm. The enzyme catalyses ATP + H2O + a folded polypeptide = ADP + phosphate + an unfolded polypeptide.. Its function is as follows. Together with its co-chaperonin GroES, plays an essential role in assisting protein folding. The GroEL-GroES system forms a nano-cage that allows encapsulation of the non-native substrate proteins and provides a physical environment optimized to promote and accelerate protein folding. This is Chaperonin GroEL 2 from Nostoc sp. (strain PCC 7120 / SAG 25.82 / UTEX 2576).